The chain runs to 342 residues: S-adenosylmethionine:tRNA ribosyltransferase-isomerase (342 aa).

Belongs to the QueA family. As to quaternary structure, monomer.

Its subcellular location is the cytoplasm. It carries out the reaction 7-aminomethyl-7-carbaguanosine(34) in tRNA + S-adenosyl-L-methionine = epoxyqueuosine(34) in tRNA + adenine + L-methionine + 2 H(+). The protein operates within tRNA modification; tRNA-queuosine biosynthesis. Transfers and isomerizes the ribose moiety from AdoMet to the 7-aminomethyl group of 7-deazaguanine (preQ1-tRNA) to give epoxyqueuosine (oQ-tRNA). The sequence is that of S-adenosylmethionine:tRNA ribosyltransferase-isomerase from Zymomonas mobilis subsp. mobilis (strain ATCC 31821 / ZM4 / CP4).